The primary structure comprises 289 residues: ATP synthase gamma chain (289 aa).

This sequence belongs to the ATPase gamma chain family. F-type ATPases have 2 components, CF(1) - the catalytic core - and CF(0) - the membrane proton channel. CF(1) has five subunits: alpha(3), beta(3), gamma(1), delta(1), epsilon(1). CF(0) has three main subunits: a, b and c.

It localises to the cell inner membrane. Its function is as follows. Produces ATP from ADP in the presence of a proton gradient across the membrane. The gamma chain is believed to be important in regulating ATPase activity and the flow of protons through the CF(0) complex. The chain is ATP synthase gamma chain from Polynucleobacter necessarius subsp. necessarius (strain STIR1).